The sequence spans 230 residues: MARLSKRLKAISEKVDRTKYYPLQDALNLVRETAIAKFDESIDVAVNLGIDAKKSDQAVRGSVVLPAGTGKTVRVAVFAQGDKAREAAAAGADIVGFEDLAEQIKAGNIEFDVAIASPDAMRVVGQLGQILGPRGLMPNPKVGTVTPDVAGAVKNAKAGQVQYRADKGGIVQCTIGRASFTVDALTQNMMALIDALNKSKPAASKGIYLRKISVSSTMGIGVRVDQTSMR.

Belongs to the universal ribosomal protein uL1 family. In terms of assembly, part of the 50S ribosomal subunit.

Functionally, binds directly to 23S rRNA. The L1 stalk is quite mobile in the ribosome, and is involved in E site tRNA release. Protein L1 is also a translational repressor protein, it controls the translation of the L11 operon by binding to its mRNA. In Nitrosospira multiformis (strain ATCC 25196 / NCIMB 11849 / C 71), this protein is Large ribosomal subunit protein uL1.